A 256-amino-acid polypeptide reads, in one-letter code: UPF0246 protein Sde_3824 (256 aa).

The protein belongs to the UPF0246 family.

The protein is UPF0246 protein Sde_3824 of Saccharophagus degradans (strain 2-40 / ATCC 43961 / DSM 17024).